The following is a 321-amino-acid chain: UDP-3-O-acylglucosamine N-acyltransferase (321 aa).

His231 acts as the Proton acceptor in catalysis.

This sequence belongs to the transferase hexapeptide repeat family. LpxD subfamily. In terms of assembly, homotrimer.

It carries out the reaction a UDP-3-O-[(3R)-3-hydroxyacyl]-alpha-D-glucosamine + a (3R)-hydroxyacyl-[ACP] = a UDP-2-N,3-O-bis[(3R)-3-hydroxyacyl]-alpha-D-glucosamine + holo-[ACP] + H(+). It participates in bacterial outer membrane biogenesis; LPS lipid A biosynthesis. Functionally, catalyzes the N-acylation of UDP-3-O-acylglucosamine using 3-hydroxyacyl-ACP as the acyl donor. Is involved in the biosynthesis of lipid A, a phosphorylated glycolipid that anchors the lipopolysaccharide to the outer membrane of the cell. The protein is UDP-3-O-acylglucosamine N-acyltransferase of Campylobacter jejuni subsp. jejuni serotype O:2 (strain ATCC 700819 / NCTC 11168).